A 476-amino-acid polypeptide reads, in one-letter code: Glutamyl-tRNA(Gln) amidotransferase subunit A (476 aa).

Catalysis depends on charge relay system residues lysine 70 and serine 145. Serine 169 (acyl-ester intermediate) is an active-site residue.

It belongs to the amidase family. GatA subfamily. As to quaternary structure, heterotrimer of A, B and C subunits.

It catalyses the reaction L-glutamyl-tRNA(Gln) + L-glutamine + ATP + H2O = L-glutaminyl-tRNA(Gln) + L-glutamate + ADP + phosphate + H(+). Allows the formation of correctly charged Gln-tRNA(Gln) through the transamidation of misacylated Glu-tRNA(Gln) in organisms which lack glutaminyl-tRNA synthetase. The reaction takes place in the presence of glutamine and ATP through an activated gamma-phospho-Glu-tRNA(Gln). The sequence is that of Glutamyl-tRNA(Gln) amidotransferase subunit A from Methanosarcina mazei (strain ATCC BAA-159 / DSM 3647 / Goe1 / Go1 / JCM 11833 / OCM 88) (Methanosarcina frisia).